Reading from the N-terminus, the 738-residue chain is NAD(P)H-quinone oxidoreductase subunit 5, chloroplastic (738 aa).

Transmembrane regions (helical) follow at residues 9–29 (WVIPLLPLPVIMSMGFGLFLI), 39–59 (IWAFPSILLLSIAMVFSLHLS), 89–109 (VDPLTSIMLILITTVGILVLI), 125–145 (FVYISFFNTSMLGLVTSSNLI), 147–167 (IYFFWELVGMCSYLLIGFWFT), 185–205 (GDFGLLLGILGFFWITGSLEF), 219–239 (NGINSLLTTLCAFLLFLGAVA), 258–278 (TPISALIHAATMVAAGIFLLA), 280–300 (LLPLFISLPLLMSFISLVGTI), 327–347 (LGYMMLALGIGSYQAALFHLI), 354–374 (ALLFLGSGSVIHSMEPLVGYS), 396–416 (TTFLCGTLSLCGIPPLACFWS), 425–445 (WLYSPFFGIIASFTAGLTAFY), 542–562 (LFPLLILLLFTLFIGSIGIPF), 610–630 (SLAIFGLFIAYIFYGSAYSFF), 691–711 (GVIDGIINGVGLAGFCIGEEI), and 717–737 (GRISSYLFFFLCYVSLFLFFI).

It belongs to the complex I subunit 5 family. In terms of assembly, NDH is composed of at least 16 different subunits, 5 of which are encoded in the nucleus.

It is found in the plastid. The protein resides in the chloroplast thylakoid membrane. It catalyses the reaction a plastoquinone + NADH + (n+1) H(+)(in) = a plastoquinol + NAD(+) + n H(+)(out). The enzyme catalyses a plastoquinone + NADPH + (n+1) H(+)(in) = a plastoquinol + NADP(+) + n H(+)(out). Functionally, NDH shuttles electrons from NAD(P)H:plastoquinone, via FMN and iron-sulfur (Fe-S) centers, to quinones in the photosynthetic chain and possibly in a chloroplast respiratory chain. The immediate electron acceptor for the enzyme in this species is believed to be plastoquinone. Couples the redox reaction to proton translocation, and thus conserves the redox energy in a proton gradient. The polypeptide is NAD(P)H-quinone oxidoreductase subunit 5, chloroplastic (ndhF) (Saccharum officinarum (Sugarcane)).